The sequence spans 199 residues: Protein GrpE (199 aa).

The protein belongs to the GrpE family. In terms of assembly, homodimer.

It localises to the cytoplasm. Participates actively in the response to hyperosmotic and heat shock by preventing the aggregation of stress-denatured proteins, in association with DnaK and GrpE. It is the nucleotide exchange factor for DnaK and may function as a thermosensor. Unfolded proteins bind initially to DnaJ; upon interaction with the DnaJ-bound protein, DnaK hydrolyzes its bound ATP, resulting in the formation of a stable complex. GrpE releases ADP from DnaK; ATP binding to DnaK triggers the release of the substrate protein, thus completing the reaction cycle. Several rounds of ATP-dependent interactions between DnaJ, DnaK and GrpE are required for fully efficient folding. This is Protein GrpE from Fusobacterium nucleatum subsp. nucleatum (strain ATCC 25586 / DSM 15643 / BCRC 10681 / CIP 101130 / JCM 8532 / KCTC 2640 / LMG 13131 / VPI 4355).